The sequence spans 247 residues: Segregation and condensation protein A (247 aa).

It belongs to the ScpA family. Component of a cohesin-like complex composed of ScpA, ScpB and the Smc homodimer, in which ScpA and ScpB bind to the head domain of Smc. The presence of the three proteins is required for the association of the complex with DNA.

The protein localises to the cytoplasm. In terms of biological role, participates in chromosomal partition during cell division. May act via the formation of a condensin-like complex containing Smc and ScpB that pull DNA away from mid-cell into both cell halves. The chain is Segregation and condensation protein A from Bacillus cereus (strain AH187).